The following is a 385-amino-acid chain: MYADAPSDSAPPEAVLPMDEAAMRAVDRATAALRRGEAVAIETADGSVGAAVSVESVAIDAVQRLVQLTGAAPVLAVTRRRATVLKLMGEGTGVVALSLPRCLTADEAHALADPEHRPDGDMPDGLTATAMDPGSRETAAVDLARLARLLPAAIVAPATDHTGSAAEWAAEHDLLLVRARDIADYRVHVVRTLRRVAEARVPLSGAENTSIAAFRPIDGGPEHLAIIVGNPVAGEPVLARLHSECFTGDLLAGLRCDCGQQLRGAIAEIARHGSGVLLYLAQEGRGIGLVNKLRAYRIQDRGFDTVDANEILGFEADERVYLPAAEMLRQLGFTAVRLMTNNPEKLRQLARCGIEVVERVPHIFPANGHNEGYLRTKAERSGHMF.

Residues 1–189 (MYADAPSDSA…RDIADYRVHV (189 aa)) form a DHBP synthase-like region. The interval 190 to 385 (VRTLRRVAEA…TKAERSGHMF (196 aa)) is GTP cyclohydrolase II. 240 to 244 (RLHSE) provides a ligand contact to GTP. C245, C256, and C258 together coordinate Zn(2+). Residues Q261, 283–285 (EGR), and T305 each bind GTP. D317 serves as the catalytic Proton acceptor. R319 acts as the Nucleophile in catalysis. GTP is bound by residues T340 and K345.

This sequence in the N-terminal section; belongs to the DHBP synthase family. It in the C-terminal section; belongs to the GTP cyclohydrolase II family. The cofactor is Zn(2+).

The catalysed reaction is GTP + 4 H2O = 2,5-diamino-6-hydroxy-4-(5-phosphoribosylamino)-pyrimidine + formate + 2 phosphate + 3 H(+). The protein operates within cofactor biosynthesis; riboflavin biosynthesis; 5-amino-6-(D-ribitylamino)uracil from GTP: step 1/4. In terms of biological role, catalyzes the conversion of GTP to 2,5-diamino-6-ribosylamino-4(3H)-pyrimidinone 5'-phosphate (DARP), formate and pyrophosphate. The chain is GTP cyclohydrolase-2 (ribA) from Azospirillum brasilense.